Consider the following 153-residue polypeptide: 3-hydroxyacyl-[acyl-carrier-protein] dehydratase FabZ (153 aa).

Residue histidine 54 is part of the active site.

It belongs to the thioester dehydratase family. FabZ subfamily.

The protein resides in the cytoplasm. It carries out the reaction a (3R)-hydroxyacyl-[ACP] = a (2E)-enoyl-[ACP] + H2O. In terms of biological role, involved in unsaturated fatty acids biosynthesis. Catalyzes the dehydration of short chain beta-hydroxyacyl-ACPs and long chain saturated and unsaturated beta-hydroxyacyl-ACPs. This Shewanella frigidimarina (strain NCIMB 400) protein is 3-hydroxyacyl-[acyl-carrier-protein] dehydratase FabZ.